A 156-amino-acid polypeptide reads, in one-letter code: Methylated-DNA--protein-cysteine methyltransferase (156 aa).

The active-site Nucleophile; methyl group acceptor is cysteine 120.

This sequence belongs to the MGMT family.

Its subcellular location is the cytoplasm. The catalysed reaction is a 6-O-methyl-2'-deoxyguanosine in DNA + L-cysteinyl-[protein] = S-methyl-L-cysteinyl-[protein] + a 2'-deoxyguanosine in DNA. The enzyme catalyses a 4-O-methyl-thymidine in DNA + L-cysteinyl-[protein] = a thymidine in DNA + S-methyl-L-cysteinyl-[protein]. Its function is as follows. Involved in the cellular defense against the biological effects of O6-methylguanine (O6-MeG) and O4-methylthymine (O4-MeT) in DNA. Repairs the methylated nucleobase in DNA by stoichiometrically transferring the methyl group to a cysteine residue in the enzyme. This is a suicide reaction: the enzyme is irreversibly inactivated. This is Methylated-DNA--protein-cysteine methyltransferase from Sulfurisphaera tokodaii (strain DSM 16993 / JCM 10545 / NBRC 100140 / 7) (Sulfolobus tokodaii).